We begin with the raw amino-acid sequence, 253 residues long: Triosephosphate isomerase (253 aa).

9-11 (NWK) contributes to the substrate binding site. The active-site Electrophile is His-96. Glu-169 functions as the Proton acceptor in the catalytic mechanism. Substrate contacts are provided by residues Gly-175, Ser-215, and 236-237 (GG).

This sequence belongs to the triosephosphate isomerase family. As to quaternary structure, homodimer.

The protein localises to the cytoplasm. It catalyses the reaction D-glyceraldehyde 3-phosphate = dihydroxyacetone phosphate. It participates in carbohydrate biosynthesis; gluconeogenesis. It functions in the pathway carbohydrate degradation; glycolysis; D-glyceraldehyde 3-phosphate from glycerone phosphate: step 1/1. In terms of biological role, involved in the gluconeogenesis. Catalyzes stereospecifically the conversion of dihydroxyacetone phosphate (DHAP) to D-glyceraldehyde-3-phosphate (G3P). The chain is Triosephosphate isomerase from Borreliella burgdorferi (strain ZS7) (Borrelia burgdorferi).